The chain runs to 130 residues: Small ribosomal subunit protein uS8 (130 aa).

This sequence belongs to the universal ribosomal protein uS8 family. As to quaternary structure, part of the 30S ribosomal subunit. Contacts proteins S5 and S12.

One of the primary rRNA binding proteins, it binds directly to 16S rRNA central domain where it helps coordinate assembly of the platform of the 30S subunit. The protein is Small ribosomal subunit protein uS8 of Ruegeria pomeroyi (strain ATCC 700808 / DSM 15171 / DSS-3) (Silicibacter pomeroyi).